Reading from the N-terminus, the 210-residue chain is Pyridoxine/pyridoxamine 5'-phosphate oxidase (210 aa).

Substrate-binding positions include 7-10 (REDY) and Lys-65. Residues 60–65 (RMVLLK), 75–76 (FT), Arg-81, Lys-82, and Gln-104 contribute to the FMN site. Positions 122, 126, and 130 each coordinate substrate. Residues 139–140 (QS) and Trp-183 each bind FMN. 189–191 (RLH) provides a ligand contact to substrate. Arg-193 is an FMN binding site.

This sequence belongs to the pyridoxamine 5'-phosphate oxidase family. In terms of assembly, homodimer. FMN is required as a cofactor.

It catalyses the reaction pyridoxamine 5'-phosphate + O2 + H2O = pyridoxal 5'-phosphate + H2O2 + NH4(+). The enzyme catalyses pyridoxine 5'-phosphate + O2 = pyridoxal 5'-phosphate + H2O2. It participates in cofactor metabolism; pyridoxal 5'-phosphate salvage; pyridoxal 5'-phosphate from pyridoxamine 5'-phosphate: step 1/1. The protein operates within cofactor metabolism; pyridoxal 5'-phosphate salvage; pyridoxal 5'-phosphate from pyridoxine 5'-phosphate: step 1/1. Its function is as follows. Catalyzes the oxidation of either pyridoxine 5'-phosphate (PNP) or pyridoxamine 5'-phosphate (PMP) into pyridoxal 5'-phosphate (PLP). The chain is Pyridoxine/pyridoxamine 5'-phosphate oxidase from Neisseria meningitidis serogroup A / serotype 4A (strain DSM 15465 / Z2491).